Here is a 159-residue protein sequence, read N- to C-terminus: Small ribosomal subunit protein uS17 (159 aa).

The protein belongs to the universal ribosomal protein uS17 family.

This chain is Small ribosomal subunit protein uS17 (RPS11), found in Euphorbia esula (Leafy spurge).